A 252-amino-acid chain; its full sequence is Triosephosphate isomerase (252 aa).

10 to 12 lines the substrate pocket; that stretch reads NWK. His96 (electrophile) is an active-site residue. Glu168 serves as the catalytic Proton acceptor. Substrate-binding positions include Gly174, Ser214, and 235-236; that span reads GG.

It belongs to the triosephosphate isomerase family. As to quaternary structure, homodimer.

It localises to the cytoplasm. It catalyses the reaction D-glyceraldehyde 3-phosphate = dihydroxyacetone phosphate. Its pathway is carbohydrate biosynthesis; gluconeogenesis. The protein operates within carbohydrate degradation; glycolysis; D-glyceraldehyde 3-phosphate from glycerone phosphate: step 1/1. Involved in the gluconeogenesis. Catalyzes stereospecifically the conversion of dihydroxyacetone phosphate (DHAP) to D-glyceraldehyde-3-phosphate (G3P). The chain is Triosephosphate isomerase from Streptococcus agalactiae serotype Ia (strain ATCC 27591 / A909 / CDC SS700).